Here is a 149-residue protein sequence, read N- to C-terminus: UPF0260 protein PA1299 (149 aa).

Belongs to the UPF0260 family.

The protein is UPF0260 protein PA1299 of Pseudomonas aeruginosa (strain ATCC 15692 / DSM 22644 / CIP 104116 / JCM 14847 / LMG 12228 / 1C / PRS 101 / PAO1).